The primary structure comprises 386 residues: Phosphoglycerate kinase (386 aa).

Residues 21–23 (DLN), Arg-36, 59–62 (HLGR), Arg-112, and Arg-145 contribute to the substrate site. Residues Lys-196, Glu-313, and 339–342 (GGDT) each bind ATP.

Belongs to the phosphoglycerate kinase family. In terms of assembly, monomer.

The protein localises to the cytoplasm. It catalyses the reaction (2R)-3-phosphoglycerate + ATP = (2R)-3-phospho-glyceroyl phosphate + ADP. It functions in the pathway carbohydrate degradation; glycolysis; pyruvate from D-glyceraldehyde 3-phosphate: step 2/5. The polypeptide is Phosphoglycerate kinase (pgk) (Haemophilus influenzae (strain ATCC 51907 / DSM 11121 / KW20 / Rd)).